Here is a 268-residue protein sequence, read N- to C-terminus: F-actin-capping protein subunit alpha (268 aa).

Serine 2 carries the post-translational modification N-acetylserine. Position 17 is a phosphoserine (serine 17).

Belongs to the F-actin-capping protein alpha subunit family. In terms of assembly, component of the F-actin capping complex, composed of a heterodimer of an alpha and a beta subunit. Interacts with BSP1 (via C-terminus); leading to recruitment of the F-actin capping complex to actin cortical patches and the acomyosin contractile ring.

The protein resides in the cytoplasm. It is found in the cytoskeleton. The protein localises to the actin patch. In terms of biological role, F-actin-capping proteins bind in a Ca(2+)-independent manner to the fast growing ends of actin filaments (barbed end) thereby blocking the exchange of subunits at these ends. Unlike other capping proteins (such as gelsolin and severin), these proteins do not sever actin filaments. The protein is F-actin-capping protein subunit alpha (CAP1) of Saccharomyces cerevisiae (strain ATCC 204508 / S288c) (Baker's yeast).